The chain runs to 349 residues: S-adenosylmethionine:tRNA ribosyltransferase-isomerase (349 aa).

The protein belongs to the QueA family. Monomer.

It localises to the cytoplasm. It carries out the reaction 7-aminomethyl-7-carbaguanosine(34) in tRNA + S-adenosyl-L-methionine = epoxyqueuosine(34) in tRNA + adenine + L-methionine + 2 H(+). It functions in the pathway tRNA modification; tRNA-queuosine biosynthesis. Transfers and isomerizes the ribose moiety from AdoMet to the 7-aminomethyl group of 7-deazaguanine (preQ1-tRNA) to give epoxyqueuosine (oQ-tRNA). This chain is S-adenosylmethionine:tRNA ribosyltransferase-isomerase, found in Flavobacterium psychrophilum (strain ATCC 49511 / DSM 21280 / CIP 103535 / JIP02/86).